The following is a 575-amino-acid chain: Hemagglutinin-neuraminidase (575 aa).

Residues 1 to 10 (MDGDRGKRDS) show a composition bias toward basic and acidic residues. The tract at residues 1-24 (MDGDRGKRDSYWSTSPSGSTTKLA) is disordered. The Intravirion segment spans residues 1–37 (MDGDRGKRDSYWSTSPSGSTTKLASGWERSSKVDTWL). An incorporation in virion region spans residues 10–14 (SYWST). Over residues 11–23 (YWSTSPSGSTTKL) the composition is skewed to polar residues. A helical membrane pass occupies residues 38-58 (LILSFTQWALSIATVIICIII). The tract at residues 59-140 (SARQGYSMKE…RQELTQLCES (82 aa)) is involved in interaction with F protein. Topologically, residues 59–575 (SARQGYSMKE…SIPKLCKAES (517 aa)) are virion surface. N-linked (GlcNAc...) asparagine; by host glycosylation occurs at Asn77. Disulfide bonds link Cys192/Cys216, Cys258/Cys271, Cys357/Cys469, and Cys463/Cys473. Residues 254-259 (NRKSCS) form an involved in neuraminidase activity region. 2 N-linked (GlcNAc...) asparagine; by host glycosylation sites follow: Asn499 and Asn511. A disulfide bridge links Cys535 with Cys544.

The protein belongs to the paramyxoviruses hemagglutinin-neuraminidase family. As to quaternary structure, homotetramer; composed of disulfide-linked homodimers. Interacts with F protein trimer. Post-translationally, N-glycosylated; glycans consist of a mixture of high mannose-type oligosaccharides and of complex-type oligosaccharides.

It localises to the virion membrane. It is found in the host cell membrane. It carries out the reaction Hydrolysis of alpha-(2-&gt;3)-, alpha-(2-&gt;6)-, alpha-(2-&gt;8)- glycosidic linkages of terminal sialic acid residues in oligosaccharides, glycoproteins, glycolipids, colominic acid and synthetic substrates.. Functionally, attaches the virus to sialic acid-containing cell receptors and thereby initiating infection. Binding of HN protein to the receptor induces a conformational change that allows the F protein to trigger virion/cell membranes fusion. Neuraminidase activity ensures the efficient spread of the virus by dissociating the mature virions from the neuraminic acid containing glycoproteins. In Sendai virus (strain Fushimi) (SeV), this protein is Hemagglutinin-neuraminidase (HN).